The primary structure comprises 240 residues: Putative tyrosine phosphatase 067L (240 aa).

Residues 3–151 (QASFFVADKA…EREWPLNPTQ (149 aa)) enclose the Tyrosine-protein phosphatase domain. The Phosphocysteine intermediate role is filled by Cys-96.

This sequence belongs to the protein-tyrosine phosphatase family.

It catalyses the reaction O-phospho-L-tyrosyl-[protein] + H2O = L-tyrosyl-[protein] + phosphate. The sequence is that of Putative tyrosine phosphatase 067L from Aedes vexans (Inland floodwater mosquito).